Here is a 124-residue protein sequence, read N- to C-terminus: Putative peptidyl-tRNA hydrolase (124 aa).

This sequence belongs to the PTH2 family.

The catalysed reaction is an N-acyl-L-alpha-aminoacyl-tRNA + H2O = an N-acyl-L-amino acid + a tRNA + H(+). This Fowlpox virus (strain NVSL) (FPV) protein is Putative peptidyl-tRNA hydrolase.